The chain runs to 160 residues: MLLLLLSIIVLHVAVLVLLFVSTIVSQWIVGNGHATDLWQNCSTSSSGNVHHCFSSSPNEWLQSVQATMILSIIFSILSLFLFFCQLFTLTKGGRFYITGIFQILAGLCVMSAAAIYTVRHPEWHLNSDYSYGFAYILAWVAFPLALLSGVIYVILRKRE.

A topological domain (cytoplasmic) is located at residue Met1. The helical transmembrane segment at 2–31 (LLLLLSIIVLHVAVLVLLFVSTIVSQWIVG) threads the bilayer. The Extracellular segment spans residues 32-64 (NGHATDLWQNCSTSSSGNVHHCFSSSPNEWLQS). N-linked (GlcNAc...) asparagine glycosylation is present at Asn41. A helical transmembrane segment spans residues 65 to 91 (VQATMILSIIFSILSLFLFFCQLFTLT). Residues 92–95 (KGGR) lie on the Cytoplasmic side of the membrane. The chain crosses the membrane as a helical span at residues 96 to 119 (FYITGIFQILAGLCVMSAAAIYTV). Residues 120 to 133 (RHPEWHLNSDYSYG) are Extracellular-facing. A helical transmembrane segment spans residues 134 to 156 (FAYILAWVAFPLALLSGVIYVIL). At 157–160 (RKRE) the chain is on the cytoplasmic side.

Belongs to the PMP-22/EMP/MP20 family. Ubiquitinated by the DCX(DCAF13) E3 ubiquitin ligase complex, leading to its degradation.

Its subcellular location is the cell membrane. Functionally, might be involved in growth regulation, and in myelinization in the peripheral nervous system. The polypeptide is Peripheral myelin protein 22 (PMP22) (Homo sapiens (Human)).